The primary structure comprises 853 residues: Replication protein A 70 kDa DNA-binding subunit C (853 aa).

Residues Pro-118–Pro-282 form a disordered region. Composition is skewed to polar residues over residues Ser-124–Gln-144, Ser-159–Asp-173, Ser-180–Asp-194, Ser-201–His-211, Pro-222–Ala-249, and Thr-263–Pro-278. A DNA-binding region (OB) is located at residues Trp-312 to Ala-399. The segment at Cys-602–Cys-628 adopts a C4-type zinc-finger fold.

Belongs to the replication factor A protein 1 family. As to quaternary structure, heterotrimer of RPA1, RPA2 and RPA3 (canonical replication protein A complex).

Its subcellular location is the nucleus. Functionally, component of the replication protein A complex (RPA) required for DNA recombination, repair and replication. The activity of RPA is mediated by single-stranded DNA binding and protein interactions. Probably involved in repair of double-strand DNA breaks (DSBs) induced by genotoxic stresses. The chain is Replication protein A 70 kDa DNA-binding subunit C (RPA1C) from Arabidopsis thaliana (Mouse-ear cress).